A 374-amino-acid polypeptide reads, in one-letter code: GDSL esterase/lipase At1g71250 (374 aa).

Residues 1–28 (MNTNRKKMKVHIGGYVLILALTVSVILQ) form the signal peptide. Serine 48 (nucleophile) is an active-site residue. Asparagine 162 is a glycosylation site (N-linked (GlcNAc...) asparagine). Catalysis depends on residues aspartate 338 and histidine 341.

Belongs to the 'GDSL' lipolytic enzyme family.

The protein resides in the secreted. This is GDSL esterase/lipase At1g71250 from Arabidopsis thaliana (Mouse-ear cress).